The following is a 120-amino-acid chain: NAD(P)H-quinone oxidoreductase subunit 3, chloroplastic (120 aa).

The next 3 helical transmembrane spans lie at 9–29 (IFWAFLIISSVIPILAFXISG), 64–84 (MFALVFVVFDVETVFLYPWAM), and 88–108 (VLGVSVFIEALIFVLILIVGL).

This sequence belongs to the complex I subunit 3 family. As to quaternary structure, NDH is composed of at least 16 different subunits, 5 of which are encoded in the nucleus.

The protein localises to the plastid. It is found in the chloroplast thylakoid membrane. The enzyme catalyses a plastoquinone + NADH + (n+1) H(+)(in) = a plastoquinol + NAD(+) + n H(+)(out). The catalysed reaction is a plastoquinone + NADPH + (n+1) H(+)(in) = a plastoquinol + NADP(+) + n H(+)(out). NDH shuttles electrons from NAD(P)H:plastoquinone, via FMN and iron-sulfur (Fe-S) centers, to quinones in the photosynthetic chain and possibly in a chloroplast respiratory chain. The immediate electron acceptor for the enzyme in this species is believed to be plastoquinone. Couples the redox reaction to proton translocation, and thus conserves the redox energy in a proton gradient. The chain is NAD(P)H-quinone oxidoreductase subunit 3, chloroplastic from Eucalyptus globulus subsp. globulus (Tasmanian blue gum).